The following is a 501-amino-acid chain: MSLLTLVHILVSFSACVEAISRADFPPGFIFGTASSAYQYEGAVNEGQRGPTIWDTLTKRPGRVIDFSNADVAVDHYHRYKEDVELMNDIGMDAYRFSISWSRIFPNGTGEPNEEGLSYYNSLIDALLDKGIEPYVTLFHWDLPQALEDRYGGWLNSEIIEDFVQYAFTCFKEFGDRVKHWITFNEPYNFAIDGYDLGIQAPGRCSILSHVFCREGKSSTEPYIVAHNILLAHAGAFRAYEQHFKNEQGGLIGIALNSRWYEPFSNADEDTEAAARAMDFELGWFLDPLMFGHYPPSMQKLAGDRLPQFSTHASKLVSGSLDFVGINHYTTLYARNDRLRIRKLVMDDASTDSAVIPTAYRHGKKIGETAASSWLHIVPWGMFKLMKHVKEKYGNPPVVITENGMDDANHPFSRLEDVLQDDKRIQYHNDYMSNLLDAIRKEGCNVHGYFVWSLLDNWEWNSGYTVRFGLYYIDYKNNLTRIPKASVQWFSQVLAQKTAII.

A signal peptide spans 1–19; sequence MSLLTLVHILVSFSACVEA. Glutamine 39 contributes to the a beta-D-glucoside binding site. The N-linked (GlcNAc...) asparagine glycan is linked to asparagine 107. Residues histidine 140 and 185 to 186 each bind a beta-D-glucoside; that span reads NE. The active-site Proton donor is the glutamate 186. The cysteines at positions 205 and 213 are disulfide-linked. Residues tyrosine 329, glutamate 402, tryptophan 452, 459–460, and phenylalanine 468 contribute to the a beta-D-glucoside site; that span reads EW. The active-site Nucleophile is the glutamate 402. N-linked (GlcNAc...) asparagine glycosylation is present at asparagine 478.

The protein belongs to the glycosyl hydrolase 1 family.

It catalyses the reaction Hydrolysis of terminal, non-reducing beta-D-glucosyl residues with release of beta-D-glucose.. This is Beta-glucosidase 25 (BGLU25) from Oryza sativa subsp. japonica (Rice).